Here is an 822-residue protein sequence, read N- to C-terminus: DNA gyrase subunit A (822 aa).

The Topo IIA-type catalytic domain occupies 32–497 (LPDVRDGLKP…QVLSLEDEDL (466 aa)). Tyrosine 120 (O-(5'-phospho-DNA)-tyrosine intermediate) is an active-site residue. The GyrA-box signature appears at 524 to 530 (QKRGGRG).

Belongs to the type II topoisomerase GyrA/ParC subunit family. As to quaternary structure, heterotetramer, composed of two GyrA and two GyrB chains. In the heterotetramer, GyrA contains the active site tyrosine that forms a transient covalent intermediate with DNA, while GyrB binds cofactors and catalyzes ATP hydrolysis.

It localises to the cytoplasm. The catalysed reaction is ATP-dependent breakage, passage and rejoining of double-stranded DNA.. Its function is as follows. A type II topoisomerase that negatively supercoils closed circular double-stranded (ds) DNA in an ATP-dependent manner to modulate DNA topology and maintain chromosomes in an underwound state. Negative supercoiling favors strand separation, and DNA replication, transcription, recombination and repair, all of which involve strand separation. Also able to catalyze the interconversion of other topological isomers of dsDNA rings, including catenanes and knotted rings. Type II topoisomerases break and join 2 DNA strands simultaneously in an ATP-dependent manner. The chain is DNA gyrase subunit A from Streptococcus pneumoniae serotype 4 (strain ATCC BAA-334 / TIGR4).